The following is a 219-amino-acid chain: Dehydration-responsive element-binding protein 1F (219 aa).

A disordered region spans residues methionine 1–proline 45. The segment covering serine 7–proline 16 has biased composition (low complexity). Residues glycine 23–glutamate 41 are compositionally biased toward basic residues. A DNA-binding region (AP2/ERF) is located at residues valine 46–proline 105. Residues arginine 134–arginine 161 are disordered.

The protein belongs to the AP2/ERF transcription factor family. ERF subfamily. Mostly expressed in developing seeds and apices.

It is found in the nucleus. In terms of biological role, transcriptional activator that binds specifically to the DNA sequence 5'-[AG]CCGAC-3'. Binding to the C-repeat/DRE element mediates high salinity- and dehydration-inducible transcription. In Oryza sativa subsp. indica (Rice), this protein is Dehydration-responsive element-binding protein 1F (DREB1F).